The primary structure comprises 171 residues: 3-hydroxydecanoyl-[acyl-carrier-protein] dehydratase (171 aa).

Residue His-71 is part of the active site.

Belongs to the thioester dehydratase family. FabA subfamily. As to quaternary structure, homodimer.

Its subcellular location is the cytoplasm. It catalyses the reaction a (3R)-hydroxyacyl-[ACP] = a (2E)-enoyl-[ACP] + H2O. It carries out the reaction (3R)-hydroxydecanoyl-[ACP] = (2E)-decenoyl-[ACP] + H2O. The enzyme catalyses (2E)-decenoyl-[ACP] = (3Z)-decenoyl-[ACP]. Its pathway is lipid metabolism; fatty acid biosynthesis. Functionally, necessary for the introduction of cis unsaturation into fatty acids. Catalyzes the dehydration of (3R)-3-hydroxydecanoyl-ACP to E-(2)-decenoyl-ACP and then its isomerization to Z-(3)-decenoyl-ACP. Can catalyze the dehydratase reaction for beta-hydroxyacyl-ACPs with saturated chain lengths up to 16:0, being most active on intermediate chain length. This chain is 3-hydroxydecanoyl-[acyl-carrier-protein] dehydratase, found in Rhizobium rhizogenes (strain K84 / ATCC BAA-868) (Agrobacterium radiobacter).